Consider the following 376-residue polypeptide: MVKKQNCVAMLLAGGKGSRLSALTKNLAKPAVPFGGKYRIIDFTLSNCSNSGIETVGILTQYQPLELHNYIGIGNAWDLDRVNGGVTVLPPYAEASGVKWYTGTASAIYQNMNFLRQYNPEYVLILSGDHIYKMDYSKMLDYHIAKEADVSISVIEVPWDEASRFGIMNTNEEMEIVEFEEKPQFPKSNLASMGIYIFNWAILKEYLEMDARNPDSSNDFGKDVLPLLLDEGKKLIAYPFQGYWKDVGTVKSLWEANMDLLRDESLLQLNDHEWRVYSVNPNEPPQFISETAKVEESLINEGCIIEGEVRHSVLFQGVTVDEGSKVIDSVVMPGAHIGKNVVIEKAIVGPGMVIEDGEVIRSEKNTDDVVLIAEGI.

Alpha-D-glucose 1-phosphate-binding positions include Tyr-101, Gly-166, 181–182 (EK), and Ser-192.

The protein belongs to the bacterial/plant glucose-1-phosphate adenylyltransferase family. Homotetramer.

The catalysed reaction is alpha-D-glucose 1-phosphate + ATP + H(+) = ADP-alpha-D-glucose + diphosphate. It participates in glycan biosynthesis; glycogen biosynthesis. Involved in the biosynthesis of ADP-glucose, a building block required for the elongation reactions to produce glycogen. Catalyzes the reaction between ATP and alpha-D-glucose 1-phosphate (G1P) to produce pyrophosphate and ADP-Glc. The sequence is that of Glucose-1-phosphate adenylyltransferase from Bacillus cytotoxicus (strain DSM 22905 / CIP 110041 / 391-98 / NVH 391-98).